A 338-amino-acid chain; its full sequence is NADPH dehydrogenase (338 aa).

Residue 23–26 coordinates FMN; sequence SPMC. Tyr28 serves as a coordination point for substrate. FMN-binding residues include Ala60 and Gln102. 164 to 167 contacts substrate; the sequence is HGAH. Residues Arg215 and 307 to 308 each bind FMN; that span reads GR.

It belongs to the NADH:flavin oxidoreductase/NADH oxidase family. NamA subfamily. As to quaternary structure, homotetramer. Requires FMN as cofactor.

The enzyme catalyses A + NADPH + H(+) = AH2 + NADP(+). Catalyzes the reduction of the double bond of an array of alpha,beta-unsaturated aldehydes and ketones. It also reduces the nitro group of nitroester and nitroaromatic compounds. It could have a role in detoxification processes. This Bacillus pumilus (strain SAFR-032) protein is NADPH dehydrogenase.